Consider the following 371-residue polypeptide: tRNA-specific 2-thiouridylase MnmA (371 aa).

ATP is bound by residues 13 to 20 (GMSGGVDS) and methionine 39. Residues 99 to 101 (NPD) form an interaction with target base in tRNA region. Cysteine 104 acts as the Nucleophile in catalysis. Cysteine 104 and cysteine 200 form a disulfide bridge. An ATP-binding site is contributed by glycine 128. Positions 150 to 152 (KDQ) are interaction with tRNA. Residue cysteine 200 is the Cysteine persulfide intermediate of the active site. The interaction with tRNA stretch occupies residues 308-309 (RY).

It belongs to the MnmA/TRMU family.

The protein localises to the cytoplasm. The enzyme catalyses S-sulfanyl-L-cysteinyl-[protein] + uridine(34) in tRNA + AH2 + ATP = 2-thiouridine(34) in tRNA + L-cysteinyl-[protein] + A + AMP + diphosphate + H(+). Functionally, catalyzes the 2-thiolation of uridine at the wobble position (U34) of tRNA, leading to the formation of s(2)U34. This chain is tRNA-specific 2-thiouridylase MnmA, found in Bacillus cytotoxicus (strain DSM 22905 / CIP 110041 / 391-98 / NVH 391-98).